The primary structure comprises 320 residues: 4-diphosphocytidyl-2-C-methyl-D-erythritol kinase (320 aa).

K20 is a catalytic residue. Residue 112–122 participates in ATP binding; sequence PVAGGMGGGSA. The active site involves D154.

It belongs to the GHMP kinase family. IspE subfamily.

It carries out the reaction 4-CDP-2-C-methyl-D-erythritol + ATP = 4-CDP-2-C-methyl-D-erythritol 2-phosphate + ADP + H(+). Its pathway is isoprenoid biosynthesis; isopentenyl diphosphate biosynthesis via DXP pathway; isopentenyl diphosphate from 1-deoxy-D-xylulose 5-phosphate: step 3/6. Catalyzes the phosphorylation of the position 2 hydroxy group of 4-diphosphocytidyl-2C-methyl-D-erythritol. The chain is 4-diphosphocytidyl-2-C-methyl-D-erythritol kinase from Arthrobacter sp. (strain FB24).